The chain runs to 349 residues: MIEFDNLTYLHGKPQGTGLLKANPEDFVVVEDLGFEPDGEGEHILVRILKNGCNTRFVADALAKFLKIHAREVSFAGQKDKHAVTEQWLCARVPGKEMPDLSAFQLEGCQVLEYVRHKRKLRLGALKGNAFTLVLREVSNRDDVEQRLIDICVKGVPNYFGAQRFGIGGSNLQGALRWAQTNTPVRDRNKRSFWLSAARSALFNQIVAERLKKADVNQVVDGDALQLAGRGSWFVATTEELAELQRRVNDKELMITAALPGSGEWGTQREALAFEQAAVAAETELQALLVREKVEAARRAMLLYPQQLSWNWWDDVTVEIRFWLPAGSFATSVVRELINTTGDYAHIAE.

Phe27 provides a ligand contact to substrate. The active-site Nucleophile is the Asp80. Asn129 lines the substrate pocket. One can recognise a TRUD domain in the interval 155–303 (GVPNYFGAQR…VEAARRAMLL (149 aa)). Phe329 lines the substrate pocket.

This sequence belongs to the pseudouridine synthase TruD family.

The enzyme catalyses uridine(13) in tRNA = pseudouridine(13) in tRNA. Functionally, responsible for synthesis of pseudouridine from uracil-13 in transfer RNAs. This is tRNA pseudouridine synthase D from Escherichia coli O17:K52:H18 (strain UMN026 / ExPEC).